Here is a 306-residue protein sequence, read N- to C-terminus: Ornithine carbamoyltransferase (306 aa).

Carbamoyl phosphate contacts are provided by residues 50–53 (STRT), Gln77, Arg101, and 128–131 (HPCQ). L-ornithine-binding positions include Asn160, Asp224, and 228 to 229 (SM). Carbamoyl phosphate contacts are provided by residues 261 to 262 (CL) and Arg289.

It belongs to the aspartate/ornithine carbamoyltransferase superfamily. OTCase family.

It localises to the cytoplasm. It catalyses the reaction carbamoyl phosphate + L-ornithine = L-citrulline + phosphate + H(+). It participates in amino-acid biosynthesis; L-arginine biosynthesis; L-arginine from L-ornithine and carbamoyl phosphate: step 1/3. In terms of biological role, reversibly catalyzes the transfer of the carbamoyl group from carbamoyl phosphate (CP) to the N(epsilon) atom of ornithine (ORN) to produce L-citrulline. The polypeptide is Ornithine carbamoyltransferase (Aquifex aeolicus (strain VF5)).